Consider the following 197-residue polypeptide: FMN-dependent NADH:quinone oxidoreductase (197 aa).

FMN is bound by residues Ser10 and 16–18 (SIS).

It belongs to the azoreductase type 1 family. In terms of assembly, homodimer. It depends on FMN as a cofactor.

The catalysed reaction is 2 a quinone + NADH + H(+) = 2 a 1,4-benzosemiquinone + NAD(+). It carries out the reaction N,N-dimethyl-1,4-phenylenediamine + anthranilate + 2 NAD(+) = 2-(4-dimethylaminophenyl)diazenylbenzoate + 2 NADH + 2 H(+). Functionally, quinone reductase that provides resistance to thiol-specific stress caused by electrophilic quinones. In terms of biological role, also exhibits azoreductase activity. Catalyzes the reductive cleavage of the azo bond in aromatic azo compounds to the corresponding amines. The chain is FMN-dependent NADH:quinone oxidoreductase from Erythrobacter litoralis (strain HTCC2594).